A 214-amino-acid chain; its full sequence is Large ribosomal subunit protein bL25 (214 aa).

Residues 189–214 form a disordered region; the sequence is IHASRKAKADEDEAAEGEEGEEGAED. The span at 198–214 shows a compositional bias: acidic residues; sequence DEDEAAEGEEGEEGAED.

This sequence belongs to the bacterial ribosomal protein bL25 family. CTC subfamily. Part of the 50S ribosomal subunit; part of the 5S rRNA/L5/L18/L25 subcomplex. Contacts the 5S rRNA. Binds to the 5S rRNA independently of L5 and L18.

Its function is as follows. This is one of the proteins that binds to the 5S RNA in the ribosome where it forms part of the central protuberance. This chain is Large ribosomal subunit protein bL25, found in Alkalilimnicola ehrlichii (strain ATCC BAA-1101 / DSM 17681 / MLHE-1).